The sequence spans 180 residues: dCTP deaminase (180 aa).

Residues 101–106 (KSSFAR) and aspartate 117 each bind dCTP. Glutamate 127 acts as the Proton donor/acceptor in catalysis. DCTP-binding residues include tyrosine 159 and glutamine 168.

This sequence belongs to the dCTP deaminase family. Homotrimer.

The catalysed reaction is dCTP + H2O + H(+) = dUTP + NH4(+). It functions in the pathway pyrimidine metabolism; dUMP biosynthesis; dUMP from dCTP (dUTP route): step 1/2. Catalyzes the deamination of dCTP to dUTP. This chain is dCTP deaminase, found in Ignicoccus hospitalis (strain KIN4/I / DSM 18386 / JCM 14125).